The primary structure comprises 234 residues: Enterobactin synthase component D (234 aa).

D107, E109, and E152 together coordinate Mg(2+).

This sequence belongs to the P-Pant transferase superfamily. EntD family. In terms of assembly, entB, EntD, EntE, and EntF form a multienzyme complex called enterobactin synthase. It depends on Mg(2+) as a cofactor.

Its subcellular location is the membrane. The catalysed reaction is apo-[aryl-carrier protein] + CoA = holo-[aryl-carrier protein] + adenosine 3',5'-bisphosphate + H(+). It carries out the reaction apo-[peptidyl-carrier protein] + CoA = holo-[peptidyl-carrier protein] + adenosine 3',5'-bisphosphate + H(+). Its pathway is siderophore biosynthesis; enterobactin biosynthesis. Involved in the biosynthesis of the siderophore enterobactin (enterochelin), which is a macrocyclic trimeric lactone of N-(2,3-dihydroxybenzoyl)-serine. The serine trilactone serves as a scaffolding for the three catechol functionalities that provide hexadentate coordination for the tightly ligated iron(2+) atoms. Plays an essential role in the assembly of the enterobactin by catalyzing the transfer of the 4'-phosphopantetheine (Ppant) moiety from coenzyme A to the apo-domains of both EntB (ArCP domain) and EntF (PCP domain) to yield their holo-forms which make them competent for the activation of 2,3-dihydroxybenzoate (DHB) and L-serine, respectively. The sequence is that of Enterobactin synthase component D from Salmonella typhi.